Consider the following 317-residue polypeptide: Phospho-N-acetylmuramoyl-pentapeptide-transferase (317 aa).

The next 9 helical transmembrane spans lie at 4-24 (LIYS…ILIP), 49-69 (TPTM…AVIV), 76-96 (AMIA…DDTL), 112-132 (MILL…NPYI), 147-167 (LGVF…NAVN), 186-206 (FLAL…CAIL), 223-243 (IFMG…VAMI), 246-266 (LPLL…SVIF), and 297-317 (RVVS…FLSL).

Belongs to the glycosyltransferase 4 family. MraY subfamily. Mg(2+) is required as a cofactor.

It is found in the cell membrane. It carries out the reaction UDP-N-acetyl-alpha-D-muramoyl-L-alanyl-gamma-D-glutamyl-meso-2,6-diaminopimeloyl-D-alanyl-D-alanine + di-trans,octa-cis-undecaprenyl phosphate = di-trans,octa-cis-undecaprenyl diphospho-N-acetyl-alpha-D-muramoyl-L-alanyl-D-glutamyl-meso-2,6-diaminopimeloyl-D-alanyl-D-alanine + UMP. Its pathway is cell wall biogenesis; peptidoglycan biosynthesis. Its function is as follows. Catalyzes the initial step of the lipid cycle reactions in the biosynthesis of the cell wall peptidoglycan: transfers peptidoglycan precursor phospho-MurNAc-pentapeptide from UDP-MurNAc-pentapeptide onto the lipid carrier undecaprenyl phosphate, yielding undecaprenyl-pyrophosphoryl-MurNAc-pentapeptide, known as lipid I. This is Phospho-N-acetylmuramoyl-pentapeptide-transferase from Clostridium kluyveri (strain NBRC 12016).